The following is a 365-amino-acid chain: tRNA N6-adenosine threonylcarbamoyltransferase (365 aa).

2 residues coordinate Fe cation: His-111 and His-115. Substrate-binding positions include 140–144 (IVSGG), Asp-173, Gly-186, and Asn-298. Asp-323 contributes to the Fe cation binding site.

The protein belongs to the KAE1 / TsaD family. Fe(2+) is required as a cofactor.

The protein resides in the cytoplasm. It catalyses the reaction L-threonylcarbamoyladenylate + adenosine(37) in tRNA = N(6)-L-threonylcarbamoyladenosine(37) in tRNA + AMP + H(+). Functionally, required for the formation of a threonylcarbamoyl group on adenosine at position 37 (t(6)A37) in tRNAs that read codons beginning with adenine. Is involved in the transfer of the threonylcarbamoyl moiety of threonylcarbamoyl-AMP (TC-AMP) to the N6 group of A37, together with TsaE and TsaB. TsaD likely plays a direct catalytic role in this reaction. The polypeptide is tRNA N6-adenosine threonylcarbamoyltransferase (Thermomicrobium roseum (strain ATCC 27502 / DSM 5159 / P-2)).